Consider the following 326-residue polypeptide: 4-hydroxy-3-methylbut-2-enyl diphosphate reductase (326 aa).

Cys-22 lines the [4Fe-4S] cluster pocket. Positions 51 and 84 each coordinate (2E)-4-hydroxy-3-methylbut-2-enyl diphosphate. His-51 and His-84 together coordinate dimethylallyl diphosphate. Positions 51 and 84 each coordinate isopentenyl diphosphate. Position 106 (Cys-106) interacts with [4Fe-4S] cluster. His-134 lines the (2E)-4-hydroxy-3-methylbut-2-enyl diphosphate pocket. Position 134 (His-134) interacts with dimethylallyl diphosphate. His-134 is a binding site for isopentenyl diphosphate. Glu-136 serves as the catalytic Proton donor. A (2E)-4-hydroxy-3-methylbut-2-enyl diphosphate-binding site is contributed by Thr-174. Cys-204 serves as a coordination point for [4Fe-4S] cluster. Positions 232, 233, 234, and 276 each coordinate (2E)-4-hydroxy-3-methylbut-2-enyl diphosphate. Dimethylallyl diphosphate is bound by residues Ser-232, Ser-233, Asn-234, and Ser-276. Residues Ser-232, Ser-233, Asn-234, and Ser-276 each contribute to the isopentenyl diphosphate site.

Belongs to the IspH family. The cofactor is [4Fe-4S] cluster.

The catalysed reaction is isopentenyl diphosphate + 2 oxidized [2Fe-2S]-[ferredoxin] + H2O = (2E)-4-hydroxy-3-methylbut-2-enyl diphosphate + 2 reduced [2Fe-2S]-[ferredoxin] + 2 H(+). It carries out the reaction dimethylallyl diphosphate + 2 oxidized [2Fe-2S]-[ferredoxin] + H2O = (2E)-4-hydroxy-3-methylbut-2-enyl diphosphate + 2 reduced [2Fe-2S]-[ferredoxin] + 2 H(+). It functions in the pathway isoprenoid biosynthesis; dimethylallyl diphosphate biosynthesis; dimethylallyl diphosphate from (2E)-4-hydroxy-3-methylbutenyl diphosphate: step 1/1. The protein operates within isoprenoid biosynthesis; isopentenyl diphosphate biosynthesis via DXP pathway; isopentenyl diphosphate from 1-deoxy-D-xylulose 5-phosphate: step 6/6. In terms of biological role, catalyzes the conversion of 1-hydroxy-2-methyl-2-(E)-butenyl 4-diphosphate (HMBPP) into a mixture of isopentenyl diphosphate (IPP) and dimethylallyl diphosphate (DMAPP). Acts in the terminal step of the DOXP/MEP pathway for isoprenoid precursor biosynthesis. The polypeptide is 4-hydroxy-3-methylbut-2-enyl diphosphate reductase (Bordetella parapertussis (strain 12822 / ATCC BAA-587 / NCTC 13253)).